A 254-amino-acid polypeptide reads, in one-letter code: PHD finger protein ALFIN-LIKE 8 (254 aa).

The segment at 137–194 (GTAKKQSKEKTPKTSGKSNKSGTKPSRQPEPNSRGPKMPPPKDEDDSGGEEEEEEEDH) is disordered. The segment covering 149–162 (KTSGKSNKSGTKPS) has biased composition (low complexity). Positions 179–194 (DEDDSGGEEEEEEEDH) are enriched in acidic residues. The PHD-type zinc finger occupies 196–248 (NTLCGACGDNYGQDEFWICCDACETWFHGKCVKITPAKAEHIKHYKCPNCSSS).

The protein belongs to the Alfin family. In terms of assembly, interacts with H3K4me3 and to a lesser extent with H3K4me2.

It localises to the nucleus. Functionally, histone-binding component that specifically recognizes H3 tails trimethylated on 'Lys-4' (H3K4me3), which mark transcription start sites of virtually all active genes. This Oryza sativa subsp. japonica (Rice) protein is PHD finger protein ALFIN-LIKE 8.